The following is a 106-amino-acid chain: MICOS complex subunit MIC12 (106 aa).

A helical transmembrane segment spans residues valine 11 to tyrosine 27.

The protein belongs to the MICOS complex subunit Mic12 family. Component of the mitochondrial contact site and cristae organizing system (MICOS) complex.

The protein resides in the mitochondrion inner membrane. In terms of biological role, component of the MICOS complex, a large protein complex of the mitochondrial inner membrane that plays crucial roles in the maintenance of crista junctions, inner membrane architecture, and formation of contact sites to the outer membrane. This Saccharomyces cerevisiae (strain RM11-1a) (Baker's yeast) protein is MICOS complex subunit MIC12 (AIM5).